The primary structure comprises 193 residues: Sarcoplasmic calcium-binding protein (193 aa).

EF-hand domains follow at residues 16 to 40 (MYDI…NTLI), 57 to 92 (IMSN…LCCG), and 101 to 136 (CFKT…RSAF). Ca(2+) contacts are provided by Asp18, Asp20, Asn22, Tyr24, Asp29, Asp70, Asn72, Asp74, Gln76, Glu81, Asp114, Asn116, Asp118, and Glu125.

Monomer and dimer. As to expression, skeletal muscle (at protein level).

Functionally, like parvalbumins, SCPs seem to be more abundant in fast contracting muscles, but no functional relationship can be established from this distribution. This is Sarcoplasmic calcium-binding protein from Scylla paramamosain (Mud crab).